The following is a 248-amino-acid chain: Tabserin (248 aa).

The first 19 residues, 1–19, serve as a signal peptide directing secretion; that stretch reads MLKYSALFLYLIYVGGSES. The Peptidase S1 domain maps to 24 to 248; sequence IVGGVPVAEE…PYFENGLRKR (225 aa). Residues C49 and C65 are joined by a disulfide bond. Catalysis depends on charge relay system residues H64 and D111. Cystine bridges form between C175–C189 and C201–C226. The active-site Charge relay system is the S205.

Belongs to the peptidase S1 family. Expressed in salivary glands.

The protein localises to the secreted. Serine protease that inhibits blood coagulation in a dose-dependent manner. May act by destroying coagulant factors to inhibit blood coagulation. The protein is Tabserin of Tabanus yao (Horsefly).